Reading from the N-terminus, the 977-residue chain is Serine/threonine-protein kinase N2 (977 aa).

3 consecutive REM-1 domains span residues 24–100 (NLDF…HIVV), 114–194 (DTPK…TSEI), and 200–280 (DVTT…ELPK). A C2 domain is found at 298–468 (PPNSPRQSIM…LYLEPQGTLF (171 aa)). Disordered stretches follow at residues 342–381 (GRSK…LSKS) and 531–576 (AADL…KRNS). Polar residues predominate over residues 358 to 378 (EARSSFMSRGNKNKSGSSRTL). The region spanning 650 to 909 (FKCVAVLGRG…AEEVKRHPFF (260 aa)) is the Protein kinase domain. ATP is bound by residues 656–664 (LGRGHFGKV) and Lys679. Asp775 functions as the Proton acceptor in the catalytic mechanism. Positions 910 to 977 (RDMDWPGLLA…ADFDYIADWC (68 aa)) constitute an AGC-kinase C-terminal domain.

Belongs to the protein kinase superfamily. AGC Ser/Thr protein kinase family. PKC subfamily. Post-translationally, autophosphorylated. Phosphorylated. In terms of processing, proteolytically cleaved.

The protein localises to the cytoplasm. It is found in the nucleus. Its subcellular location is the membrane. The protein resides in the cell projection. It localises to the lamellipodium. The protein localises to the cytoskeleton. It is found in the cleavage furrow. Its subcellular location is the midbody. The protein resides in the cell junction. The catalysed reaction is L-seryl-[protein] + ATP = O-phospho-L-seryl-[protein] + ADP + H(+). It carries out the reaction L-threonyl-[protein] + ATP = O-phospho-L-threonyl-[protein] + ADP + H(+). Kinase activity is activated upon binding to GTP-bound Rho/Rac GTPases. Activated by lipids, particularly cardiolipin and to a lesser extent by other acidic phospholipids and unsaturated fatty acids. Two specific sites, Thr-809 (activation loop of the kinase domain) and Thr-951 (turn motif), may be needed to be phosphorylated for its full activation. Pkc-related serine/threonine-protein kinase and Rho/Rac effector protein that participates in specific signal transduction responses in the cell. May play a role in the regulation of cell cycle progression, actin cytoskeleton assembly, cell migration, cell adhesion and transcription activation signaling processes. The polypeptide is Serine/threonine-protein kinase N2 (pkn2) (Danio rerio (Zebrafish)).